The following is a 296-amino-acid chain: UDP-N-acetylglucosamine transporter TMEM241 homolog (296 aa).

Transmembrane regions (helical) follow at residues 7 to 29, 41 to 61, 67 to 87, 93 to 113, 126 to 146, 147 to 167, 187 to 207, 217 to 237, 248 to 266, and 272 to 291; these read AVGL…VLSV, WQTL…WLEI, SDVV…YAGS, LPIP…YGFQ, IFSI…DPQF, DADG…YKVF, VFSV…ISAL, FHSG…ASVK, ASWN…LIYF, and VPLT…LVYA.

The protein belongs to the nucleotide-sugar transporter family. SLC35A subfamily.

It is found in the golgi apparatus. The protein resides in the cis-Golgi network membrane. Its function is as follows. Golgi-localized UDP-N-acetylglucosamine (UDP-GlcNAc) transporter that transports UDP-N-acetylglucosamine into Golgi lumen. The sequence is that of UDP-N-acetylglucosamine transporter TMEM241 homolog (tmem241) from Xenopus laevis (African clawed frog).